Here is a 599-residue protein sequence, read N- to C-terminus: MGSVSSLISGHSFHSKHCRASQYKLRKSSHLKKLNRYSDGLLRFGFSQDSGRGKSSSKMGKSEDFFYIKVSQKARGSHRPDYTALSSGDIGGQTGVDFDPATPPKLMPFSNQLEMSSDKGAVRPTAFKPVLPRSGAILHSSPESTSHQLHPMPPDKPKEQELKPGLCSGALSDSGRNSMSSLPTHSTTSSYQLDPLVTPVGPTSRFGGSAHNITQGIILQDSNMMSLKALSFSDGGSKLAHPGKADKGASCVRSPLSTDECTIQELEQKLLQRETALQKLQRSFDEKEFASGQTFEERPRRTRDELECLEPKSKLKPPSQKSQRTQQVLQLQVLQLQQEKRQLRQELESLMKEQDLLETKLRSYEREKTNFAPALEETQWEVCQKSGEISLLKQQLKESQLEVNTKASEILSLKAQLKDTRGKLDGMELKTQDLESALRTKGLELEVCENELQRKKNEAELLREKVNLLEQELMELRAQAALHPAPLGPPGVGLTFSEDIPALQRELDRLRAELKEERQGHDQMSSGFQHERLVWKEEKEKVIQYQRQLQQSYLAMYQRNQRLEKALQQLARGDGPGEPFEIDLEGADIPYEDIIATEI.

Gly2 carries the N-myristoyl glycine lipid modification. 2 disordered regions span residues 135–190 (GAIL…TTSS) and 288–324 (EFAS…KSQR). The segment covering 153-162 (PPDKPKEQEL) has biased composition (basic and acidic residues). Polar residues predominate over residues 174 to 190 (SGRNSMSSLPTHSTTSS). Positions 256-572 (LSTDECTIQE…LEKALQQLAR (317 aa)) form a coiled coil. Over residues 288-313 (EFASGQTFEERPRRTRDELECLEPKS) the composition is skewed to basic and acidic residues.

This sequence belongs to the LZTS family. Binds EEF1G, TLK2 and CDK1. Post-translationally, phosphorylated on serine residues. Hyperphosphorylated by the cAMP-dependent kinase PKA during cell-cycle progression.

The protein localises to the cytoplasm. Its subcellular location is the cell membrane. The protein resides in the cell projection. It localises to the dendritic spine. It is found in the postsynaptic density. The protein localises to the synapse. Involved in the regulation of cell growth. May stabilize the active CDC2-cyclin B1 complex and thereby contribute to the regulation of the cell cycle and the prevention of uncontrolled cell proliferation. May act as tumor suppressor. This chain is Leucine zipper putative tumor suppressor 1 (Lzts1), found in Mus musculus (Mouse).